The sequence spans 491 residues: MVFGEFFHRPGPDEELVNLNVGGFKQSVDQSTLLRFPHTRLGKLLTCHSEEAILELCDDYSVADKEYYFDRNPSLFRYVLNFYYTGKLHVMEELCVFSFCQEIEYWGINELFIDSCCSNRYQERKEENHEKDWDQKSNDVSTDTSFEESSVFEKELEKFDQLRFGQLRKKIWIRMENPAYCLSAKLIAISSLSVVLASIVAMCVHSMSEFQNEDGEVDDPVLEGVEIACIAWFTGELAVRLVAAPCQKKFWKNPLNIIDFVSIIPFYATLAVDTKEEESEDIENMGKVVQILRLMRIFRILKLARHSVGLRSLGATLRHSYHEVGLLLLFLSVGISIFSVLIYSVEKDDHTSSLTSIPICWWWATISMTTVGYGDTHPVTLAGKLIASTCIICGILVVALPITIIFNKFSKYYQKQKDIDVDQCSEDPPEKCPELPYFNIRDLYAQRVHAFITSLSSVGIVVSDPDSTDASSIEDNEDVYNTASLENCTAK.

The Cytoplasmic segment spans residues 1–182 (MVFGEFFHRP…IRMENPAYCL (182 aa)). The chain crosses the membrane as a helical span at residues 183–204 (SAKLIAISSLSVVLASIVAMCV). The Extracellular portion of the chain corresponds to 205–220 (HSMSEFQNEDGEVDDP). A helical transmembrane segment spans residues 221–243 (VLEGVEIACIAWFTGELAVRLVA). Residues 244–254 (APCQKKFWKNP) are Cytoplasmic-facing. A helical transmembrane segment spans residues 255–275 (LNIIDFVSIIPFYATLAVDTK). Topologically, residues 276-285 (EEESEDIENM) are extracellular. Residues 286–306 (GKVVQILRLMRIFRILKLARH) form a helical; Voltage-sensor membrane-spanning segment. The Cytoplasmic segment spans residues 307 to 321 (SVGLRSLGATLRHSY). Residues 322–343 (HEVGLLLLFLSVGISIFSVLIY) traverse the membrane as a helical segment. The Extracellular segment spans residues 344–357 (SVEKDDHTSSLTSI). Residues 358–369 (PICWWWATISMT) constitute an intramembrane region (helical). The Selectivity filter motif lies at 370–375 (TVGYGD). An intramembrane segment occupies 370 to 377 (TVGYGDTH). Residues 378 to 384 (PVTLAGK) are Extracellular-facing. The chain crosses the membrane as a helical span at residues 385 to 413 (LIASTCIICGILVVALPITIIFNKFSKYY). Topologically, residues 414-491 (QKQKDIDVDQ…TASLENCTAK (78 aa)) are cytoplasmic.

It belongs to the potassium channel family. S (TC 1.A.1.2) subfamily. Kv9.3/KCNS3 sub-subfamily. As to quaternary structure, heterotetramer with KCNB1. Does not form homomultimers.

It is found in the cell membrane. Its function is as follows. Potassium channel regulatory subunit that modulates the delayed rectifier potassium channel activity of KCNB1 by namely slowing down the deactivation and inactivation time constants. While it does not form functional channel on its own, it can form functional heterotetrameric channels with KCNB1. The chain is Delayed-rectifier potassium channel regulatory subunit KCNS3 from Oryctolagus cuniculus (Rabbit).